The chain runs to 460 residues: ESX-1 secretion-associated protein EspB (460 aa).

Disordered stretches follow at residues Leu92 to Leu116, Pro303 to Thr335, and Leu405 to Arg441.

In terms of processing, cleaved in the C-terminal region by MycP1.

It localises to the secreted. In Mycobacterium tuberculosis (strain CDC 1551 / Oshkosh), this protein is ESX-1 secretion-associated protein EspB.